The following is a 455-amino-acid chain: UDP-N-acetylmuramoylalanine--D-glutamate ligase (455 aa).

117 to 123 (GTNGKTT) contributes to the ATP binding site.

This sequence belongs to the MurCDEF family.

The protein resides in the cytoplasm. It catalyses the reaction UDP-N-acetyl-alpha-D-muramoyl-L-alanine + D-glutamate + ATP = UDP-N-acetyl-alpha-D-muramoyl-L-alanyl-D-glutamate + ADP + phosphate + H(+). It participates in cell wall biogenesis; peptidoglycan biosynthesis. Cell wall formation. Catalyzes the addition of glutamate to the nucleotide precursor UDP-N-acetylmuramoyl-L-alanine (UMA). This Alkaliphilus metalliredigens (strain QYMF) protein is UDP-N-acetylmuramoylalanine--D-glutamate ligase.